A 152-amino-acid chain; its full sequence is Deoxyuridine 5'-triphosphate nucleotidohydrolase (152 aa).

Substrate-binding positions include 71 to 73 (RSG), N84, and 88 to 90 (LID).

Belongs to the dUTPase family. Mg(2+) serves as cofactor.

The enzyme catalyses dUTP + H2O = dUMP + diphosphate + H(+). The protein operates within pyrimidine metabolism; dUMP biosynthesis; dUMP from dCTP (dUTP route): step 2/2. Functionally, this enzyme is involved in nucleotide metabolism: it produces dUMP, the immediate precursor of thymidine nucleotides and it decreases the intracellular concentration of dUTP so that uracil cannot be incorporated into DNA. This Xanthomonas campestris pv. campestris (strain 8004) protein is Deoxyuridine 5'-triphosphate nucleotidohydrolase.